The primary structure comprises 116 residues: Large ribosomal subunit protein uL18 (116 aa).

The protein belongs to the universal ribosomal protein uL18 family. In terms of assembly, part of the 50S ribosomal subunit; part of the 5S rRNA/L5/L18/L25 subcomplex. Contacts the 5S and 23S rRNAs.

Its function is as follows. This is one of the proteins that bind and probably mediate the attachment of the 5S RNA into the large ribosomal subunit, where it forms part of the central protuberance. The chain is Large ribosomal subunit protein uL18 from Marinomonas sp. (strain MWYL1).